An 83-amino-acid polypeptide reads, in one-letter code: Carboxysome shell vertex protein CsoS4A (83 aa).

In terms of domain architecture, BMV spans 1–78; that stretch reads MKIMQVEKTL…SDLTIIGIID (78 aa).

Belongs to the CcmL/EutN family. CsoS4 subfamily. Homopentamer.

It localises to the carboxysome. In terms of biological role, probably forms vertices in the carboxysome, a polyhedral inclusion where RuBisCO (ribulose bisphosphate carboxylase, cbbL-cbbS) is sequestered. Has been modeled to induce curvature upon insertion into an otherwise flat hexagonal layer of major carboxysome subunits. A minor shell protein, only 12 pentamers of CsoS4A/CsoS4B are calculated to be present in each carboxysome. The 2 CsoS4 proteins contribute to the impermeability of the carboxysome to CO(2). Unlike beta-carboxysomes, alpha-carboxysomes (Cb) can form without cargo protein. CsoS2 is essential for Cb formation and is also capable of targeting foreign proteins to the Cb. The Cb shell assembles with the aid of CsoS2; CsoS1A, CsoS1B and CsoS1C form the majority of the shell while CsoS4A and CsoS4B form vertices. CsoS1D forms pseudohexamers that probably control metabolite flux into and out of the shell. The polypeptide is Carboxysome shell vertex protein CsoS4A (Halothiobacillus neapolitanus (strain ATCC 23641 / c2) (Thiobacillus neapolitanus)).